Consider the following 267-residue polypeptide: Large ribosomal subunit protein uL3 (267 aa).

The tract at residues 124-147 (NQHIGPKSHGGGGGSQPVRQTGSL) is disordered.

The protein belongs to the universal ribosomal protein uL3 family. Part of the 50S ribosomal subunit. Forms a cluster with proteins L14 and L19.

In terms of biological role, one of the primary rRNA binding proteins, it binds directly near the 3'-end of the 23S rRNA, where it nucleates assembly of the 50S subunit. The protein is Large ribosomal subunit protein uL3 of Mycoplasmopsis agalactiae (strain NCTC 10123 / CIP 59.7 / PG2) (Mycoplasma agalactiae).